Consider the following 104-residue polypeptide: L-rhamnose mutarotase (104 aa).

Residue Y18 participates in substrate binding. H22 acts as the Proton donor in catalysis. Substrate contacts are provided by residues Y41 and 76–77 (WW).

The protein belongs to the rhamnose mutarotase family. In terms of assembly, homodimer.

The protein resides in the cytoplasm. The catalysed reaction is alpha-L-rhamnose = beta-L-rhamnose. It functions in the pathway carbohydrate metabolism; L-rhamnose metabolism. Involved in the anomeric conversion of L-rhamnose. The sequence is that of L-rhamnose mutarotase from Shigella sonnei (strain Ss046).